The following is a 225-amino-acid chain: Superoxide dismutase [Mn], mitochondrial (225 aa).

Residues 1–27 (MITAITRTALPRATLRTSLATMSTIRA) constitute a mitochondrion transit peptide. Positions 53, 101, 187, and 191 each coordinate Mn(2+).

The protein belongs to the iron/manganese superoxide dismutase family. The cofactor is Mn(2+).

The protein localises to the mitochondrion. The protein resides in the cytoplasm. The catalysed reaction is 2 superoxide + 2 H(+) = H2O2 + O2. Destroys radicals which are normally produced within the cells and which are toxic to biological systems. Functionally, destroys mitochondrial radicals produced by oxidative stress. In terms of biological role, destroys cytoplasmic radicals produced in low copper environments; a condition which inactivates the cytoplasmic copper-dependent superoxide dismutase SOD1. The chain is Superoxide dismutase [Mn], mitochondrial from Cryptococcus neoformans var. grubii serotype A (strain H99 / ATCC 208821 / CBS 10515 / FGSC 9487) (Filobasidiella neoformans var. grubii).